The primary structure comprises 172 residues: Adenine phosphoribosyltransferase (172 aa).

This sequence belongs to the purine/pyrimidine phosphoribosyltransferase family. In terms of assembly, homodimer.

It is found in the cytoplasm. The catalysed reaction is AMP + diphosphate = 5-phospho-alpha-D-ribose 1-diphosphate + adenine. Its pathway is purine metabolism; AMP biosynthesis via salvage pathway; AMP from adenine: step 1/1. In terms of biological role, catalyzes a salvage reaction resulting in the formation of AMP, that is energically less costly than de novo synthesis. The sequence is that of Adenine phosphoribosyltransferase from Prochlorococcus marinus (strain SARG / CCMP1375 / SS120).